Consider the following 426-residue polypeptide: Putative competence-damage inducible protein (426 aa).

It belongs to the CinA family.

The polypeptide is Putative competence-damage inducible protein (Symbiobacterium thermophilum (strain DSM 24528 / JCM 14929 / IAM 14863 / T)).